The primary structure comprises 393 residues: METFLFTSESVNEGHPDKLCDQISDAVLDACLAQDPESKVACETCTKTNMVMVFGEITTKAQVDYEKIVRDTCRAIGFVSDDVGLDADNCKVLVNIEQQSPDIAQGVHGHLTKRPEEIGAGDQGHMFGYATDETPELMPLSHVLATKLGARLTEVRKNGTCPWLRPDGKTQVTVEYYNDNGAMVPIRVHTVLISTQHDETVTNDEIAADLKEHVIKPVVPEKYLDEKTIFHLNPSGRFVIGGPHGDAGLTGRKIIIDTYGGWGAHGGGAFSGKDPTKVDRSGAYIVRQAAKSIVASGLARRCIVQVSYAIGVPEPLSVFVDTYGTGKIPDKEILKIVKENFDFRPGMIAINLDLKRGGNSRFLKTAAYGHFGREDPDFTWEVVKPLKFEKVEA.

Position 9 (Glu-9) interacts with Mg(2+). His-15 provides a ligand contact to ATP. Glu-43 provides a ligand contact to K(+). L-methionine-binding residues include Glu-56 and Gln-99. ATP contacts are provided by residues 167–169, 235–238, Asp-246, 252–253, Ala-269, Lys-273, and Lys-277; these read DGK, SGRF, and RK. L-methionine is bound at residue Asp-246. Residue Lys-277 participates in L-methionine binding.

Belongs to the AdoMet synthase family. As to quaternary structure, homotetramer. Requires Mn(2+) as cofactor. Mg(2+) serves as cofactor. It depends on Co(2+) as a cofactor. The cofactor is K(+). NH4(+) is required as a cofactor. In terms of tissue distribution, mostly expressed in roots, and, to a lower extent, in hypocotyls and cotyledons.

It localises to the cytoplasm. It catalyses the reaction L-methionine + ATP + H2O = S-adenosyl-L-methionine + phosphate + diphosphate. It participates in amino-acid biosynthesis; S-adenosyl-L-methionine biosynthesis; S-adenosyl-L-methionine from L-methionine: step 1/1. Inhibited by products of SAMS reaction (SAM, Pi, PPi), substrate analogs (cycloleucine and ethionine), and alternative nucleotides (GTP, CTP and ADP). Strongly repressed by PPPi. In terms of biological role, catalyzes the formation of S-adenosylmethionine from methionine and ATP. The reaction comprises two steps that are both catalyzed by the same enzyme: formation of S-adenosylmethionine (AdoMet) and triphosphate, and subsequent hydrolysis of the triphosphate. In Catharanthus roseus (Madagascar periwinkle), this protein is S-adenosylmethionine synthase 2 (SAMS2).